The chain runs to 96 residues: UPF0235 protein YpsIP31758_0827 (96 aa).

The protein belongs to the UPF0235 family.

This is UPF0235 protein YpsIP31758_0827 from Yersinia pseudotuberculosis serotype O:1b (strain IP 31758).